The sequence spans 280 residues: MKKLQLLAPAKVNYRLDVLGKRPDGYHELRMIMQRVDLCDEIEIALTDVPGIRVTCGRKGVPDGPGNIAWRAADALLKLSGKEVGIDISIAKKIPVGAGLGGGSSDAATVLMGVNELLGLGLTDERLMEIGVKLGADVPFFIFKKPALAEGIGDRLTALEEVPSLWVVLVNPGIHVSTAWVYQNLRLTTGNPITIIPRSYSSLDEVCALLSNDLEPVTCGRFPLVSEVKEVLLAAGARGSLMSGSGSTVFGLFDDENAARTAAAEIEKTRGWFAAAVRTI.

Residue K11 is part of the active site. 95 to 105 contributes to the ATP binding site; it reads PVGAGLGGGSS. The active site involves D137.

Belongs to the GHMP kinase family. IspE subfamily.

The enzyme catalyses 4-CDP-2-C-methyl-D-erythritol + ATP = 4-CDP-2-C-methyl-D-erythritol 2-phosphate + ADP + H(+). Its pathway is isoprenoid biosynthesis; isopentenyl diphosphate biosynthesis via DXP pathway; isopentenyl diphosphate from 1-deoxy-D-xylulose 5-phosphate: step 3/6. Its function is as follows. Catalyzes the phosphorylation of the position 2 hydroxy group of 4-diphosphocytidyl-2C-methyl-D-erythritol. This chain is 4-diphosphocytidyl-2-C-methyl-D-erythritol kinase, found in Geobacter sp. (strain M21).